Reading from the N-terminus, the 807-residue chain is Glycerol-3-phosphate acyltransferase (807 aa).

The short motif at 308–313 is the HXXXXD motif element; it reads CHRSHM.

The protein belongs to the GPAT/DAPAT family.

The protein resides in the cell inner membrane. It catalyses the reaction sn-glycerol 3-phosphate + an acyl-CoA = a 1-acyl-sn-glycero-3-phosphate + CoA. It functions in the pathway phospholipid metabolism; CDP-diacylglycerol biosynthesis; CDP-diacylglycerol from sn-glycerol 3-phosphate: step 1/3. The sequence is that of Glycerol-3-phosphate acyltransferase from Shewanella baltica (strain OS195).